Consider the following 245-residue polypeptide: Uridylate kinase (245 aa).

14 to 17 (KLSG) serves as a coordination point for ATP. Residue Gly-56 coordinates UMP. ATP-binding residues include Gly-57 and Arg-61. UMP-binding positions include Asp-76 and 137-144 (TGLPFFTT). The ATP site is built by Thr-164, Tyr-170, and Asp-173.

Belongs to the UMP kinase family. As to quaternary structure, homohexamer.

It is found in the cytoplasm. It catalyses the reaction UMP + ATP = UDP + ADP. It functions in the pathway pyrimidine metabolism; CTP biosynthesis via de novo pathway; UDP from UMP (UMPK route): step 1/1. Inhibited by UTP. Functionally, catalyzes the reversible phosphorylation of UMP to UDP. The sequence is that of Uridylate kinase from Syntrophobacter fumaroxidans (strain DSM 10017 / MPOB).